We begin with the raw amino-acid sequence, 235 residues long: Probable transcriptional regulatory protein Ccon26_04940 (235 aa).

Belongs to the TACO1 family.

The protein resides in the cytoplasm. This Campylobacter concisus (strain 13826) protein is Probable transcriptional regulatory protein Ccon26_04940.